Here is a 350-residue protein sequence, read N- to C-terminus: Dihydroorotate dehydrogenase (quinone) (350 aa).

FMN contacts are provided by residues 67–71 (AGFDK) and Gly91. Lys71 contacts substrate. 116–120 (NRMGL) lines the substrate pocket. Positions 144 and 177 each coordinate FMN. Asn177 serves as a coordination point for substrate. The active-site Nucleophile is the Cys180. Asn182 serves as a coordination point for substrate. FMN-binding residues include Lys213 and Thr241. A substrate-binding site is contributed by 242–243 (NT). A disordered region spans residues 245–265 (TERPASLRSPNAVETGGLSGK). FMN is bound by residues Gly264, Gly291, and 312-313 (YT).

This sequence belongs to the dihydroorotate dehydrogenase family. Type 2 subfamily. In terms of assembly, monomer. It depends on FMN as a cofactor.

The protein resides in the cell membrane. The catalysed reaction is (S)-dihydroorotate + a quinone = orotate + a quinol. It functions in the pathway pyrimidine metabolism; UMP biosynthesis via de novo pathway; orotate from (S)-dihydroorotate (quinone route): step 1/1. In terms of biological role, catalyzes the conversion of dihydroorotate to orotate with quinone as electron acceptor. The chain is Dihydroorotate dehydrogenase (quinone) (pyrD) from Haloarcula marismortui (strain ATCC 43049 / DSM 3752 / JCM 8966 / VKM B-1809) (Halobacterium marismortui).